The following is a 44-amino-acid chain: MDNPAFFFTIFLWFFLLSITAYSIYVGFGPPSKRLRDPFEEHED.

Residues 6–26 (FFFTIFLWFFLLSITAYSIYV) traverse the membrane as a helical segment.

Belongs to the PsbN family.

It is found in the plastid. The protein resides in the chloroplast thylakoid membrane. May play a role in photosystem I and II biogenesis. This is Protein PsbN from Stigeoclonium helveticum (Green alga).